Consider the following 315-residue polypeptide: Methionyl-tRNA formyltransferase (315 aa).

114 to 117 (SLLP) lines the (6S)-5,6,7,8-tetrahydrofolate pocket.

The protein belongs to the Fmt family.

The catalysed reaction is L-methionyl-tRNA(fMet) + (6R)-10-formyltetrahydrofolate = N-formyl-L-methionyl-tRNA(fMet) + (6S)-5,6,7,8-tetrahydrofolate + H(+). Functionally, attaches a formyl group to the free amino group of methionyl-tRNA(fMet). The formyl group appears to play a dual role in the initiator identity of N-formylmethionyl-tRNA by promoting its recognition by IF2 and preventing the misappropriation of this tRNA by the elongation apparatus. In Corynebacterium glutamicum (strain R), this protein is Methionyl-tRNA formyltransferase.